Reading from the N-terminus, the 156-residue chain is Snaclec A4 (156 aa).

An N-terminal signal peptide occupies residues 1-23; the sequence is MGRSISVSFGLLVVFLSLSGTGA. Cys-27 and Cys-38 are joined by a disulfide. Residues 34-155 form the C-type lectin domain; it reads HEGHCYKVFN…CGQPYRFTCE (122 aa). Asn-45 carries an N-linked (GlcNAc...) asparagine glycan. Intrachain disulfides connect Cys-55–Cys-154 and Cys-129–Cys-146.

Belongs to the snaclec family. As to quaternary structure, heterodimer; disulfide-linked. As to expression, expressed by the venom gland.

The protein localises to the secreted. Its function is as follows. Interferes with one step of hemostasis (modulation of platelet aggregation, or coagulation cascade, for example). The chain is Snaclec A4 from Macrovipera lebetinus (Levantine viper).